Consider the following 198-residue polypeptide: Holliday junction resolvase RecU (198 aa).

The interval 1-22 is disordered; that stretch reads MVNYPHKVSSQKRQTSLSQPKN. The segment covering 11-22 has biased composition (polar residues); it reads QKRQTSLSQPKN. Residues T81, D83, E96, and Q115 each contribute to the Mg(2+) site.

Belongs to the RecU family. Mg(2+) is required as a cofactor.

Its subcellular location is the cytoplasm. It carries out the reaction Endonucleolytic cleavage at a junction such as a reciprocal single-stranded crossover between two homologous DNA duplexes (Holliday junction).. Endonuclease that resolves Holliday junction intermediates in genetic recombination. Cleaves mobile four-strand junctions by introducing symmetrical nicks in paired strands. Promotes annealing of linear ssDNA with homologous dsDNA. Required for DNA repair, homologous recombination and chromosome segregation. This Streptococcus pneumoniae (strain P1031) protein is Holliday junction resolvase RecU.